Consider the following 548-residue polypeptide: MNRRSCAFIFVTGGVSSSIGKGLTTSALASLMQSMGFRVCIRKMDPYLNVDPGTMSPLQHGEVFVTEDGTEADLDLGHYERFTGINCTHRDSTTAGRIYVDLIERERNGEYLGATVQVIPHVTNLIKDFIYSGSDQYDVILCEIGGTVGDIEGQPFFESARQVAYEVGKENVIYIHLTLVPYLEASGELKTKPSQHSVKALNALGIQPDFLICRTQSAQMSAADKRKIALFCNIREGNVIEAQDVDNIYKIPLIYKEQGLDTKISALLGCGPLEAGVSHWKEIVGRTRSLANSGKKLFVAIIGKYSGLCDAYISVDSALQHAAFAVGVNLSVQIIDARGKDMSDLSKFDMILIPGGFGNNGIDGKLLAITHARINNIPFLGICFGFQLAILEFARNVVGIKDADSTEFNKNCKAPVICFLDEWHRSDSSVERRRQSSQVGGTMRLGGYNCVLKKESKAYAIYNETEVISERHRHRYEANPHYLPELEAKGMLFSGYSEKGCDIPEILELKDHPWFLGVQFHPEFKSRIFKPHPLFLSFVRAGLLRKYS.

The amidoligase domain stretch occupies residues 1–270; the sequence is MNRRSCAFIF…DTKISALLGC (270 aa). Ser-17 lines the CTP pocket. Residue Ser-17 participates in UTP binding. Residues 18–23 and Asp-75 contribute to the ATP site; that span reads SIGKGL. Residues Asp-75 and Glu-143 each coordinate Mg(2+). CTP is bound by residues 150 to 152, 190 to 195, and Lys-227; these read DIE and KTKPSQ. Residues 190–195 and Lys-227 contribute to the UTP site; that span reads KTKPSQ. A Glutamine amidotransferase type-1 domain is found at 305–548; the sequence is YSGLCDAYIS…VRAGLLRKYS (244 aa). Gly-356 lines the L-glutamine pocket. Cys-383 functions as the Nucleophile; for glutamine hydrolysis in the catalytic mechanism. L-glutamine is bound by residues 384–387, Glu-407, and Arg-475; that span reads FGFQ. Residues His-521 and Glu-523 contribute to the active site.

This sequence belongs to the CTP synthase family. Homotetramer.

It carries out the reaction UTP + L-glutamine + ATP + H2O = CTP + L-glutamate + ADP + phosphate + 2 H(+). The enzyme catalyses L-glutamine + H2O = L-glutamate + NH4(+). The catalysed reaction is UTP + NH4(+) + ATP = CTP + ADP + phosphate + 2 H(+). Its pathway is pyrimidine metabolism; CTP biosynthesis via de novo pathway; CTP from UDP: step 2/2. Its activity is regulated as follows. Allosterically activated by GTP, when glutamine is the substrate; GTP has no effect on the reaction when ammonia is the substrate. The allosteric effector GTP functions by stabilizing the protein conformation that binds the tetrahedral intermediate(s) formed during glutamine hydrolysis. Inhibited by the product CTP, via allosteric rather than competitive inhibition. Catalyzes the ATP-dependent amination of UTP to CTP with either L-glutamine or ammonia as the source of nitrogen. Regulates intracellular CTP levels through interactions with the four ribonucleotide triphosphates. This Neorickettsia sennetsu (strain ATCC VR-367 / Miyayama) (Ehrlichia sennetsu) protein is CTP synthase.